Consider the following 571-residue polypeptide: Glutamate--tRNA ligase (571 aa).

Positions Pro-106–Asn-116 match the 'HIGH' region motif.

This sequence belongs to the class-I aminoacyl-tRNA synthetase family. Glutamate--tRNA ligase type 2 subfamily.

Its subcellular location is the cytoplasm. It carries out the reaction tRNA(Glu) + L-glutamate + ATP = L-glutamyl-tRNA(Glu) + AMP + diphosphate. Catalyzes the attachment of glutamate to tRNA(Glu) in a two-step reaction: glutamate is first activated by ATP to form Glu-AMP and then transferred to the acceptor end of tRNA(Glu). The sequence is that of Glutamate--tRNA ligase from Pyrococcus abyssi (strain GE5 / Orsay).